The chain runs to 214 residues: Large ribosomal subunit protein uL4c (214 aa).

The segment at 43–80 (KQSNEKRQGSANTKTRSEVRGGGRKPWRQKGTGRARAG) is disordered. Basic residues predominate over residues 64–75 (GGRKPWRQKGTG).

It belongs to the universal ribosomal protein uL4 family. Part of the 50S ribosomal subunit.

The protein resides in the plastid. It localises to the chloroplast. In terms of biological role, probably binds the 23S rRNA. This Porphyra purpurea (Red seaweed) protein is Large ribosomal subunit protein uL4c (rpl4).